A 443-amino-acid chain; its full sequence is Thymidine phosphorylase (443 aa).

It belongs to the thymidine/pyrimidine-nucleoside phosphorylase family. Homodimer.

It carries out the reaction thymidine + phosphate = 2-deoxy-alpha-D-ribose 1-phosphate + thymine. It functions in the pathway pyrimidine metabolism; dTMP biosynthesis via salvage pathway; dTMP from thymine: step 1/2. The enzymes which catalyze the reversible phosphorolysis of pyrimidine nucleosides are involved in the degradation of these compounds and in their utilization as carbon and energy sources, or in the rescue of pyrimidine bases for nucleotide synthesis. The sequence is that of Thymidine phosphorylase from Shewanella putrefaciens (strain CN-32 / ATCC BAA-453).